The following is a 250-amino-acid chain: Proteasome subunit alpha type-8 (250 aa).

Belongs to the peptidase T1A family. As to quaternary structure, component of the outer alpha-ring of the 20S proteasome core which is composed of 28 subunits that are arranged in four stacked rings, resulting in a barrel-shaped structure. The catalytic chamber with the active sites is on the inside of the barrel. Interacts with canonical subunits of the spermatoproteasome, including proteasome activators PSME4 (also called PA200) and PSME3 (also called PA28-gamma). Interacts with proteasome-interacting proteins chaperones including CCT6B and CCT2, ubiquitin ligases (TRIP12, NEDD4, TRIM36 and RAD18), and ubiquitin specific proteases such as USP9X, USP34, USP5 and USP47. Interacts with meiotic proteins cyclin dependent kinase CDK1 and the ATPase TRIP13 as well as proteins of the synaptonemal complex SIX6OS1 and SYCE3.

It localises to the nucleus. In terms of biological role, component of the spermatoproteasome, a proteasome specifically found in testis that promotes acetylation-dependent degradation of histones, thereby participating actively to the exchange of histones during spermatogenesis. The proteasome is a protein complex that degrades unneeded or damaged proteins by proteolysis, a chemical reaction that breaks peptide bonds. Required for 20S core proteasome assembly, essential for the degradation of meiotic proteins RAD51 and RPA1 at late prophase I and the progression of meiosis I during spermatogenesis. Localizes to the synaptonemal complex, a 'zipper'-like structure that holds homologous chromosome pairs in synapsis during meiotic prophase I. The chain is Proteasome subunit alpha type-8 from Mus musculus (Mouse).